Reading from the N-terminus, the 259-residue chain is Polycomb group RING finger protein 1 (259 aa).

The segment at 45–84 (CYLCAGYFIDATTITECLHTFCKSCIVKYLQTSKYCPLCN) adopts an RING-type zinc-finger fold.

In terms of assembly, component of a PRC1-like complex.

Its subcellular location is the nucleus. Functionally, component of a Polycomb group (PcG) multiprotein PRC1-like complex, a complex class required to maintain the transcriptionally repressive state of many genes, including Hox genes, throughout development. PcG PRC1 complex acts via chromatin remodeling and modification of histones; it mediates monoubiquitination of histone H2A 'Lys-119', rendering chromatin heritably changed in its expressibility. The chain is Polycomb group RING finger protein 1 (pcgf1) from Xenopus laevis (African clawed frog).